The sequence spans 321 residues: uncharacterized protein (321 aa).

Residues 1–12 (MQGGREVGRESV) show a composition bias toward basic and acidic residues. Positions 1–85 (MQGGREVGRE…GWGEFEGFQE (85 aa)) are disordered. Residues 53-67 (NANSSRLDEGLSSSR) show a composition bias toward polar residues.

This is an uncharacterized protein from Rattus norvegicus (Rat).